Reading from the N-terminus, the 78-residue chain is D-alanyl carrier protein (78 aa).

Residues 1–78 (MDFKQEVLDV…NIVNQLSELK (78 aa)) form the Carrier domain. Ser36 bears the O-(pantetheine 4'-phosphoryl)serine mark.

The protein belongs to the DltC family. In terms of processing, 4'-phosphopantetheine is transferred from CoA to a specific serine of apo-DCP.

The protein localises to the cytoplasm. Its pathway is cell wall biogenesis; lipoteichoic acid biosynthesis. Carrier protein involved in the D-alanylation of lipoteichoic acid (LTA). The loading of thioester-linked D-alanine onto DltC is catalyzed by D-alanine--D-alanyl carrier protein ligase DltA. The DltC-carried D-alanyl group is further transferred to cell membrane phosphatidylglycerol (PG) by forming an ester bond, probably catalyzed by DltD. D-alanylation of LTA plays an important role in modulating the properties of the cell wall in Gram-positive bacteria, influencing the net charge of the cell wall. The chain is D-alanyl carrier protein from Bacillus subtilis (strain 168).